A 362-amino-acid chain; its full sequence is Serine/threonine-protein kinase ZRK4 (362 aa).

Positions 1 to 23 (MNDQKMSCWRKKSKKKNSEANQR) are disordered. Residues 35–362 (LEDLIELCNG…KELKRIERWT (328 aa)) form the Protein kinase domain. ATP-binding positions include 41-49 (LCNGKSNPI) and lysine 89. Catalysis depends on aspartate 185, which acts as the Proton acceptor.

The protein belongs to the protein kinase superfamily. Ser/Thr protein kinase family. ZRK subfamily.

The enzyme catalyses L-seryl-[protein] + ATP = O-phospho-L-seryl-[protein] + ADP + H(+). The catalysed reaction is L-threonyl-[protein] + ATP = O-phospho-L-threonyl-[protein] + ADP + H(+). This chain is Serine/threonine-protein kinase ZRK4, found in Arabidopsis thaliana (Mouse-ear cress).